We begin with the raw amino-acid sequence, 242 residues long: Probable transcriptional regulatory protein Cthe_2075 (242 aa).

It belongs to the TACO1 family.

It is found in the cytoplasm. This chain is Probable transcriptional regulatory protein Cthe_2075, found in Acetivibrio thermocellus (strain ATCC 27405 / DSM 1237 / JCM 9322 / NBRC 103400 / NCIMB 10682 / NRRL B-4536 / VPI 7372) (Clostridium thermocellum).